We begin with the raw amino-acid sequence, 514 residues long: 2-isopropylmalate synthase (514 aa).

Residues 5–267 (LIIFDTTLRD…HTDIETREIV (263 aa)) form the Pyruvate carboxyltransferase domain. Positions 14, 202, 204, and 238 each coordinate Mn(2+). Residues 393–514 (KLVALRVCSE…QRTHPQVGDV (122 aa)) form a regulatory domain region.

The protein belongs to the alpha-IPM synthase/homocitrate synthase family. LeuA type 1 subfamily. In terms of assembly, homodimer. It depends on Mn(2+) as a cofactor.

Its subcellular location is the cytoplasm. It catalyses the reaction 3-methyl-2-oxobutanoate + acetyl-CoA + H2O = (2S)-2-isopropylmalate + CoA + H(+). It functions in the pathway amino-acid biosynthesis; L-leucine biosynthesis; L-leucine from 3-methyl-2-oxobutanoate: step 1/4. Functionally, catalyzes the condensation of the acetyl group of acetyl-CoA with 3-methyl-2-oxobutanoate (2-ketoisovalerate) to form 3-carboxy-3-hydroxy-4-methylpentanoate (2-isopropylmalate). This is 2-isopropylmalate synthase from Methylococcus capsulatus (strain ATCC 33009 / NCIMB 11132 / Bath).